The primary structure comprises 824 residues: Translation initiation factor IF-2 (824 aa).

Disordered regions lie at residues 1–32 and 45–232; these read MSDT…GRTK and VPKA…MGGQ. Positions 45-57 are enriched in low complexity; the sequence is VPKAGATTSAGGK. Positions 86-144 are enriched in basic and acidic residues; the sequence is KAREAEEEAARIAEEKARAEERERRRAEQEERERAEREREESLKAKAEEDKRRKDEAEA. Over residues 145–167 the composition is skewed to low complexity; the sequence is AAKAAAAPAAEPVVQRPAAKAAP. The segment covering 170–193 has biased composition (basic and acidic residues); the sequence is APRKQQDRDRDNKRGGKGNDDSRR. A tr-type G domain is found at 321–489; that stretch reads TRPPVVTIMG…AIALQAEILE (169 aa). The interval 330-337 is G1; sequence GHVDHGKT. 330-337 is a binding site for GTP; that stretch reads GHVDHGKT. Residues 355 to 359 are G2; sequence GITQH. The interval 377–380 is G3; that stretch reads DTPG. GTP-binding positions include 377 to 381 and 431 to 434; these read DTPGH and NKID. Residues 431-434 are G4; the sequence is NKID. Residues 467 to 469 are G5; it reads SAI.

Belongs to the TRAFAC class translation factor GTPase superfamily. Classic translation factor GTPase family. IF-2 subfamily.

Its subcellular location is the cytoplasm. Functionally, one of the essential components for the initiation of protein synthesis. Protects formylmethionyl-tRNA from spontaneous hydrolysis and promotes its binding to the 30S ribosomal subunits. Also involved in the hydrolysis of GTP during the formation of the 70S ribosomal complex. This is Translation initiation factor IF-2 from Roseobacter denitrificans (strain ATCC 33942 / OCh 114) (Erythrobacter sp. (strain OCh 114)).